A 163-amino-acid polypeptide reads, in one-letter code: Aspartate 1-decarboxylase (163 aa).

The active-site Schiff-base intermediate with substrate; via pyruvic acid is the Ser25. Ser25 bears the Pyruvic acid (Ser) mark. Thr57 provides a ligand contact to substrate. Tyr58 acts as the Proton donor in catalysis. 73-75 (GAA) is a binding site for substrate.

It belongs to the PanD family. In terms of assembly, heterooctamer of four alpha and four beta subunits. The cofactor is pyruvate. Is synthesized initially as an inactive proenzyme, which is activated by self-cleavage at a specific serine bond to produce a beta-subunit with a hydroxyl group at its C-terminus and an alpha-subunit with a pyruvoyl group at its N-terminus.

Its subcellular location is the cytoplasm. It catalyses the reaction L-aspartate + H(+) = beta-alanine + CO2. It functions in the pathway cofactor biosynthesis; (R)-pantothenate biosynthesis; beta-alanine from L-aspartate: step 1/1. Its function is as follows. Catalyzes the pyruvoyl-dependent decarboxylation of aspartate to produce beta-alanine. The polypeptide is Aspartate 1-decarboxylase (Saccharopolyspora erythraea (strain ATCC 11635 / DSM 40517 / JCM 4748 / NBRC 13426 / NCIMB 8594 / NRRL 2338)).